The primary structure comprises 164 residues: MTVLTIEEMAATLAPGQAIAGLDLGTKTIGLSMSDLGRRFATPRPVIRRAKFTIDAQALLDFAAKERVAGFVIGLPMNMDGSAGPRVQATRAFVRNMEEKTALPFVYWDERLSTVAAERTLLEMDVSRAKRAERIDSAAASFILQGALDRLSLLARSDGDEFSA.

This sequence belongs to the YqgF nuclease family.

The protein resides in the cytoplasm. In terms of biological role, could be a nuclease involved in processing of the 5'-end of pre-16S rRNA. This chain is Putative pre-16S rRNA nuclease, found in Rhizobium etli (strain CIAT 652).